Consider the following 301-residue polypeptide: Probable alpha-L-glutamate ligase (301 aa).

The ATP-grasp domain maps to 104-287 (LQLLSRKGIG…VAGMIFDFIE (184 aa)). ATP is bound by residues lysine 141, 178 to 179 (EF), aspartate 187, and 211 to 213 (RSN). Positions 248, 260, and 262 each coordinate Mg(2+). The Mn(2+) site is built by aspartate 248, glutamate 260, and asparagine 262.

The protein belongs to the RimK family. Requires Mg(2+) as cofactor. It depends on Mn(2+) as a cofactor.

The chain is Probable alpha-L-glutamate ligase from Vibrio parahaemolyticus serotype O3:K6 (strain RIMD 2210633).